A 1659-amino-acid chain; its full sequence is Intersectin-2 (1659 aa).

Residues 22–110 form the EH 1 domain; that stretch reads ERTKHDKQFD…PIMKQPPMFS (89 aa). The region spanning 54 to 89 is the EF-hand 1 domain; sequence LPAPVLAEIWALSDLNKDGKMDQQEFSIAMKLIKLK. D67, N69, D71, K73, and E78 together coordinate Ca(2+). Phosphoserine is present on residues S110, S211, and S231. The span at 220–231 shows a compositional bias: low complexity; that stretch reads STSSTASLSGNS. Positions 220–242 are disordered; sequence STSSTASLSGNSPKTGTSEWAVP. The 90-residue stretch at 245 to 334 folds into the EH 2 domain; that stretch reads SRLKYRQKFN…PELVPPSFRG (90 aa). Positions 278-313 constitute an EF-hand 2 domain; it reads LSQTQLATIWTLADIDGDGQLKAEEFILAMHLTDMA. Positions 335–382 are disordered; that stretch reads GKQVDSVNGTLPSYQKTQEEEPQKKLPVTFEDKRKANYERGNMELEKR. The segment covering 339 to 350 has biased composition (polar residues); sequence DSVNGTLPSYQK. The segment covering 351–382 has biased composition (basic and acidic residues); sequence TQEEEPQKKLPVTFEDKRKANYERGNMELEKR. Residues 365-717 adopt a coiled-coil conformation; sequence EDKRKANYER…KAEAKQSETA (353 aa). Position 554 is a phosphotyrosine (Y554). T574 carries the phosphothreonine modification. The segment covering 689 to 713 has biased composition (basic and acidic residues); the sequence is KQKRLQEEKSQDKTQEEERKAEAKQ. Positions 689–715 are disordered; that stretch reads KQKRLQEEKSQDKTQEEERKAEAKQSE. Residues 718-779 form the SH3 1 domain; the sequence is SALVNYRALY…PCNYVEKVLS (62 aa). Residue T836 is modified to Phosphothreonine. Residues S838 and S843 each carry the phosphoserine modification. An SH3 2 domain is found at 852 to 910; sequence VENLKAQALCSWTAKKENHLNFSKHDVITVLEQQENWWFGEVHGGRGWFPKSYVKLIPG. At Y922 the chain carries Phosphotyrosine. SH3 domains lie at 942-1000, 1014-1078, and 1088-1147; these read PVGE…PKDQ, KKPE…LLGP, and HAVC…MTTD. The region spanning 1170-1357 is the DH domain; the sequence is KRQGYIHELI…EELCSQVNEG (188 aa). Positions 1396-1506 constitute a PH domain; it reads KLLHSGKLYK…WVQKIKGASE (111 aa). Positions 1514 to 1630 constitute a C2 domain; sequence KKREKAYQAR…RTEQESKGPT (117 aa). D1602, S1605, and D1608 together coordinate Ca(2+).

As to quaternary structure, belongs to a complex that may contain multimers of ITSN1, ITSN2 and EPS15, and different partners according to the step in the endocytic process. Interacts with ADAM15. Interacts with FASLG. Interacts with ANKRD54. Interacts with FCHO2. Requires Ca(2+) as cofactor. As to expression, widely expressed in adult tissues.

The protein localises to the cytoplasm. In terms of biological role, adapter protein that may provide indirect link between the endocytic membrane traffic and the actin assembly machinery. May regulate the formation of clathrin-coated vesicles (CCPs). Seems to be involved in CCPs maturation including invagination or budding. Involved in endocytosis of integrin beta-1 (ITGB1) and transferrin receptor (TFR). Plays a role in dendrite formation by melanocytes. In Mus musculus (Mouse), this protein is Intersectin-2 (Itsn2).